The chain runs to 1345 residues: Probable membrane antigen 75 (1345 aa).

It localises to the virion tegument. The sequence is that of Probable membrane antigen 75 (75) from Equine herpesvirus 2 (strain 86/87) (EHV-2).